The chain runs to 186 residues: Ribosome-recycling factor (186 aa).

This sequence belongs to the RRF family.

Its subcellular location is the cytoplasm. Responsible for the release of ribosomes from messenger RNA at the termination of protein biosynthesis. May increase the efficiency of translation by recycling ribosomes from one round of translation to another. The sequence is that of Ribosome-recycling factor from Paracidovorax citrulli (strain AAC00-1) (Acidovorax citrulli).